Reading from the N-terminus, the 457-residue chain is MSLLPPEQRQLLHRCILNYIRSQVPGDGAEGETGGQTEERHVMNSLAKWLRVDPDGLDGEKAADGSLLPRKWSSIVRLQRRIIELEKEIQELTDENENLRENGPSSPANGALKSWLPRERPSFSISAGASVTSVKLHPELPLVFIATDAGKLQCYDLMNYTMPVASVQAHMRGITAIDAYVGEDSQCLVATASKDLHCKVFRFVDSELQLIRTLSGHEHIVSHIKIWNNSTNTLVASCSRDLTCKVWDIANGWCLKSFQPHTEWVRCLDVMGDFVVTGSNDCTVRLSHWPTGRSLSFGTGHEFPVEKIRIIPLQPPESAEHSHRFNTHDEDYLPLGFSHVISTSRDGTLRIWQVPLPRFVAHRAPQPNPARPYFNLVATLKGHSSWVRDVRVRGKHAFSCSDDRSIKVWDLSTCEVVRSINNLHSGFINCIDIDCGGLNRQLLVSGGADGKLVILMK.

Residues 73-106 (SSIVRLQRRIIELEKEIQELTDENENLRENGPSS) are a coiled coil. WD repeat units follow at residues 126–165 (SAGA…MPVA), 169–211 (AHMR…LQLI), 216–257 (GHEH…CLKS), 260–299 (PHTE…SFGT), 322–362 (SHRF…FVAH), 382–419 (GHSS…VVRS), and 423–457 (LHSG…ILMK).

Belongs to the WD repeat LIS1/nudF family. Self-associates. Interacts with NDL1 and dynein.

Its subcellular location is the cytoplasm. The protein localises to the cytoskeleton. It is found in the spindle pole. In terms of biological role, positively regulates the activity of the minus-end directed microtubule motor protein dynein. Plays a central role in positioning the mitotic spindle at the bud neck during cell division. Targets cytoplasmic dynein to microtubule plus ends, thereby promoting dynein-mediated microtubule sliding along the bud cortex and consequently the movement of the mitotic spindle to the bud neck. The protein is Nuclear distribution protein PAC1 of Lachancea thermotolerans (strain ATCC 56472 / CBS 6340 / NRRL Y-8284) (Yeast).